The sequence spans 142 residues: Large ribosomal subunit protein uL11 (142 aa).

Belongs to the universal ribosomal protein uL11 family. In terms of assembly, part of the ribosomal stalk of the 50S ribosomal subunit. Interacts with L10 and the large rRNA to form the base of the stalk. L10 forms an elongated spine to which L12 dimers bind in a sequential fashion forming a multimeric L10(L12)X complex. Post-translationally, one or more lysine residues are methylated.

Its function is as follows. Forms part of the ribosomal stalk which helps the ribosome interact with GTP-bound translation factors. The polypeptide is Large ribosomal subunit protein uL11 (Shewanella pealeana (strain ATCC 700345 / ANG-SQ1)).